A 243-amino-acid polypeptide reads, in one-letter code: 1-(5-phosphoribosyl)-5-[(5-phosphoribosylamino)methylideneamino] imidazole-4-carboxamide isomerase (243 aa).

Residue Asp-8 is the Proton acceptor of the active site. Asp-129 acts as the Proton donor in catalysis.

Belongs to the HisA/HisF family.

It is found in the cytoplasm. The enzyme catalyses 1-(5-phospho-beta-D-ribosyl)-5-[(5-phospho-beta-D-ribosylamino)methylideneamino]imidazole-4-carboxamide = 5-[(5-phospho-1-deoxy-D-ribulos-1-ylimino)methylamino]-1-(5-phospho-beta-D-ribosyl)imidazole-4-carboxamide. Its pathway is amino-acid biosynthesis; L-histidine biosynthesis; L-histidine from 5-phospho-alpha-D-ribose 1-diphosphate: step 4/9. In Syntrophotalea carbinolica (strain DSM 2380 / NBRC 103641 / GraBd1) (Pelobacter carbinolicus), this protein is 1-(5-phosphoribosyl)-5-[(5-phosphoribosylamino)methylideneamino] imidazole-4-carboxamide isomerase.